We begin with the raw amino-acid sequence, 318 residues long: DNA-directed RNA polymerase subunit alpha 2 (318 aa).

The tract at residues 1–227 (MALENLLHPT…NQLRNIVDIE (227 aa)) is alpha N-terminal domain (alpha-NTD). The tract at residues 242-318 (INPILLKHVE…TLIENWPQDL (77 aa)) is alpha C-terminal domain (alpha-CTD).

The protein belongs to the RNA polymerase alpha chain family. In terms of assembly, homodimer. The RNAP catalytic core consists of 2 alpha, 1 beta, 1 beta' and 1 omega subunit. When a sigma factor is associated with the core the holoenzyme is formed, which can initiate transcription.

It catalyses the reaction RNA(n) + a ribonucleoside 5'-triphosphate = RNA(n+1) + diphosphate. DNA-dependent RNA polymerase catalyzes the transcription of DNA into RNA using the four ribonucleoside triphosphates as substrates. This chain is DNA-directed RNA polymerase subunit alpha 2, found in Francisella tularensis subsp. novicida (strain U112).